The sequence spans 193 residues: General stress protein 16U (193 aa).

The protein belongs to the CAPAB/TerDEXZ family.

This is General stress protein 16U (yceD) from Bacillus subtilis (strain 168).